The primary structure comprises 199 residues: Thioredoxin reductase-like selenoprotein T (199 aa).

The N-terminal stretch at 1 to 24 (MRAAGLGLGIGLLLLAALAGPGGS) is a signal peptide. Positions 50-53 (CVSU) form a cross-link, cysteinyl-selenocysteine (Cys-Sec). A non-standard amino acid (selenocysteine) is located at residue Sec53. The chain crosses the membrane as a helical span at residues 95 to 115 (VFKLVLIGLIIVGKDPFAFFG).

Belongs to the SelWTH family. Selenoprotein T subfamily. May contain a selenide-sulfide bond between Cys-50 and Sec-53. This bond is speculated to serve as redox-active pair.

The protein resides in the endoplasmic reticulum membrane. It catalyses the reaction [thioredoxin]-dithiol + NADP(+) = [thioredoxin]-disulfide + NADPH + H(+). Selenoprotein with thioredoxin reductase-like oxidoreductase activity. In Gallus gallus (Chicken), this protein is Thioredoxin reductase-like selenoprotein T.